A 433-amino-acid polypeptide reads, in one-letter code: GTPase Obg (433 aa).

An Obg domain is found at M1–L159. The 173-residue stretch at A160–K332 folds into the OBG-type G domain. Residues G166–S173, F191–T195, D213–G216, N284–D287, and S313–L315 each bind GTP. Mg(2+) is bound by residues S173 and T193. One can recognise an OCT domain in the interval K355–D433.

The protein belongs to the TRAFAC class OBG-HflX-like GTPase superfamily. OBG GTPase family. As to quaternary structure, monomer. Mg(2+) serves as cofactor.

Its subcellular location is the cytoplasm. Functionally, an essential GTPase which binds GTP, GDP and possibly (p)ppGpp with moderate affinity, with high nucleotide exchange rates and a fairly low GTP hydrolysis rate. Plays a role in control of the cell cycle, stress response, ribosome biogenesis and in those bacteria that undergo differentiation, in morphogenesis control. The protein is GTPase Obg of Mycoplasma mycoides subsp. mycoides SC (strain CCUG 32753 / NCTC 10114 / PG1).